Reading from the N-terminus, the 364-residue chain is Histidinol-phosphate aminotransferase 2 (364 aa).

K223 is subject to N6-(pyridoxal phosphate)lysine.

Belongs to the class-II pyridoxal-phosphate-dependent aminotransferase family. Histidinol-phosphate aminotransferase subfamily. As to quaternary structure, homodimer. The cofactor is pyridoxal 5'-phosphate.

It carries out the reaction L-histidinol phosphate + 2-oxoglutarate = 3-(imidazol-4-yl)-2-oxopropyl phosphate + L-glutamate. It participates in amino-acid biosynthesis; L-histidine biosynthesis; L-histidine from 5-phospho-alpha-D-ribose 1-diphosphate: step 7/9. The protein is Histidinol-phosphate aminotransferase 2 (hisC2) of Oceanobacillus iheyensis (strain DSM 14371 / CIP 107618 / JCM 11309 / KCTC 3954 / HTE831).